We begin with the raw amino-acid sequence, 251 residues long: MASKPQPIAAANWKCNGSESLLVPLIETLNAATFDHDVQCVVAPTFLHIPMTKARLTNPKFQIAAQNAITRSGAFTGEVSLQILKDYGISWVVLGHSERRLYYGETNEIVAEKVAQACAAGFHVIVCVGETNEEREAGRTAAVVLTQLAAVAQKLSKEAWSRVVIAYEPVWAIGTGKVATPQQAQEVHELLRRWVRSKLGTDIAAQLRILYGGSVTAKNARTLYQMRDINGFLVGGASLKPEFVEIIEATK.

Positions 12 and 14 each coordinate substrate. The active-site Electrophile is His96. The active-site Proton acceptor is Glu168.

Belongs to the triosephosphate isomerase family. As to quaternary structure, homodimer.

The protein localises to the glycosome. It catalyses the reaction D-glyceraldehyde 3-phosphate = dihydroxyacetone phosphate. The protein operates within carbohydrate biosynthesis; gluconeogenesis. Its pathway is carbohydrate degradation; glycolysis; D-glyceraldehyde 3-phosphate from glycerone phosphate: step 1/1. This chain is Triosephosphate isomerase, glycosomal, found in Trypanosoma cruzi.